The primary structure comprises 503 residues: Variant surface glycoprotein AnTaT 1.1 (503 aa).

The first 29 residues, 1–29 (MVTKERNAALKIVMLVASALTLHPQQALA), serve as a signal peptide directing secretion. 2 disulfides stabilise this stretch: Cys45/Cys172 and Cys154/Cys209. A glycan (N-linked (GlcNAc...) asparagine) is linked at Asn113. Asn419 and Asn432 each carry an N-linked (GlcNAc...) asparagine glycan. Asp480 carries the GPI-anchor amidated aspartate lipid modification. Positions 481–503 (SSILLTKNFALSVVSAALVALLF) are cleaved as a propeptide — removed in mature form.

The protein localises to the cell membrane. VSG forms a coat on the surface of the parasite. The trypanosome evades the immune response of the host by expressing a series of antigenically distinct VSGs from an estimated 1000 VSG genes. This chain is Variant surface glycoprotein AnTaT 1.1, found in Trypanosoma brucei brucei.